Consider the following 228-residue polypeptide: Uracil-DNA glycosylase (228 aa).

D64 serves as the catalytic Proton acceptor.

It belongs to the uracil-DNA glycosylase (UDG) superfamily. UNG family.

The protein localises to the cytoplasm. It carries out the reaction Hydrolyzes single-stranded DNA or mismatched double-stranded DNA and polynucleotides, releasing free uracil.. Its function is as follows. Excises uracil residues from the DNA which can arise as a result of misincorporation of dUMP residues by DNA polymerase or due to deamination of cytosine. This chain is Uracil-DNA glycosylase, found in Yersinia pseudotuberculosis serotype O:1b (strain IP 31758).